Here is a 264-residue protein sequence, read N- to C-terminus: Outer kinetochore KNL1 complex subunit sos7 (264 aa).

The stretch at 90 to 236 (EAEDNEKLET…SNQIKAAIHT (147 aa)) forms a coiled coil.

This sequence belongs to the KRE28 family. Component of the KNL1/SPC105 complex composed of at least spc7 and sos7. Part of the outer kinetochore KMN network that includes the KNL1, MIS12 and NDC80 complexes. Interacts (via C-terminus) with spc7 (via C-terminus); the interaction is direct.

It is found in the nucleus. Its subcellular location is the chromosome. The protein localises to the centromere. It localises to the kinetochore. Acts as a component of the outer kinetochore KNL1 complex that facilitates microtubule-kinetochore interactions and the spindle assembly checkpoint. Kinetochores, consisting of a centromere-associated inner segment and a microtubule-contacting outer segment, play a crucial role in chromosome segregation by mediating the physical connection between centromeric DNA and spindle microtubules. The outer kinetochore is made up of the ten-subunit KMN network, comprising the MIS12, NDC80 and KNL1 complexes, and auxiliary microtubule-associated components; together they connect the outer kinetochore with the inner kinetochore, bind microtubules, and mediate interactions with mitotic checkpoint proteins that delay anaphase until chromosomes are bioriented on the spindle. The sequence is that of Outer kinetochore KNL1 complex subunit sos7 (sos7) from Schizosaccharomyces pombe (strain 972 / ATCC 24843) (Fission yeast).